Consider the following 794-residue polypeptide: Zinc finger protein 148 (794 aa).

K6 is covalently cross-linked (Glycyl lysine isopeptide (Lys-Gly) (interchain with G-Cter in SUMO2)). A Phosphoserine modification is found at S51. Glycyl lysine isopeptide (Lys-Gly) (interchain with G-Cter in SUMO2) cross-links involve residues K88, K115, and K132. A C2H2-type 1 zinc finger spans residues 171–193; that stretch reads HVCEHCNAAFRTNYHLQRHVFIH. Position 194 is a phosphothreonine (T194). 2 consecutive C2H2-type zinc fingers follow at residues 199–221 and 227–249; these read FQCSQCDMRFIQKYLLQRHEKIH and FRCDECGMRFIQKYHMERHKRTH. The residue at position 250 (S250) is a Phosphoserine. Residues 255 to 278 form a C2H2-type 4 zinc finger; sequence YQCEYCLQYFSRTDRVLKHKRMCH. K291 is covalently cross-linked (Glycyl lysine isopeptide (Lys-Gly) (interchain with G-Cter in SUMO2)). The disordered stretch occupies residues 298-338; it reads EEDSGFSTSPKDNSLPKKKRQKTEKKSSGMDKESSLDKSDL. S301 and S306 each carry phosphoserine. A Glycyl lysine isopeptide (Lys-Gly) (interchain with G-Cter in SUMO2) cross-link involves residue K308. The span at 321-338 shows a compositional bias: basic and acidic residues; it reads EKKSSGMDKESSLDKSDL. K356 participates in a covalent cross-link: Glycyl lysine isopeptide (Lys-Gly) (interchain with G-Cter in SUMO1); alternate. K356 is covalently cross-linked (Glycyl lysine isopeptide (Lys-Gly) (interchain with G-Cter in SUMO2); alternate). A Glycyl lysine isopeptide (Lys-Gly) (interchain with G-Cter in SUMO2) cross-link involves residue K402. S412 carries the post-translational modification Phosphoserine. Residues K421 and K424 each participate in a glycyl lysine isopeptide (Lys-Gly) (interchain with G-Cter in SUMO2) cross-link. The segment covering 575–588 has biased composition (polar residues); it reads SSEVPEVTQSENVG. The segment at 575–596 is disordered; it reads SSEVPEVTQSENVGSSSQASSS. K607 is modified (N6-acetyllysine). A phosphoserine mark is found at S665 and S784. The tract at residues 775–794 is disordered; sequence NDNRAGMTSSPDATTGQTFG.

This sequence belongs to the krueppel C2H2-type zinc-finger protein family. Interacts with HNRNPDL. Interacts with the 5FMC complex; the interaction requires association with CHTOP. Interacts with CAVIN1. Sumoylated with SUMO2. Desumoylated by SENP3, resulting in the stimulation of transcription of its target genes.

It is found in the nucleus. In terms of biological role, involved in transcriptional regulation. Represses the transcription of a number of genes including gastrin, stromelysin and enolase. Binds to the G-rich box in the enhancer region of these genes. In Bos taurus (Bovine), this protein is Zinc finger protein 148 (ZNF148).